Consider the following 227-residue polypeptide: Ribosomal RNA small subunit methyltransferase G (227 aa).

S-adenosyl-L-methionine-binding positions include Gly81, Leu86, Ala131–Glu132, and Arg149.

The protein belongs to the methyltransferase superfamily. RNA methyltransferase RsmG family.

Its subcellular location is the cytoplasm. Its function is as follows. Specifically methylates the N7 position of guanine in position 518 of 16S rRNA. This Rhodococcus jostii (strain RHA1) protein is Ribosomal RNA small subunit methyltransferase G.